A 476-amino-acid chain; its full sequence is Argininosuccinate lyase (476 aa).

Belongs to the lyase 1 family. Argininosuccinate lyase subfamily.

The protein localises to the cytoplasm. It catalyses the reaction 2-(N(omega)-L-arginino)succinate = fumarate + L-arginine. The protein operates within amino-acid biosynthesis; L-arginine biosynthesis; L-arginine from L-ornithine and carbamoyl phosphate: step 3/3. The protein is Argininosuccinate lyase of Gluconacetobacter diazotrophicus (strain ATCC 49037 / DSM 5601 / CCUG 37298 / CIP 103539 / LMG 7603 / PAl5).